The primary structure comprises 315 residues: tRNA dimethylallyltransferase (315 aa).

14-21 is an ATP binding site; that stretch reads GATATGKS. 16-21 contributes to the substrate binding site; it reads TATGKS. The segment at 39–42 is interaction with substrate tRNA; that stretch reads DSRQ.

It belongs to the IPP transferase family. In terms of assembly, monomer. Mg(2+) serves as cofactor.

It catalyses the reaction adenosine(37) in tRNA + dimethylallyl diphosphate = N(6)-dimethylallyladenosine(37) in tRNA + diphosphate. Its function is as follows. Catalyzes the transfer of a dimethylallyl group onto the adenine at position 37 in tRNAs that read codons beginning with uridine, leading to the formation of N6-(dimethylallyl)adenosine (i(6)A). This is tRNA dimethylallyltransferase from Microcystis aeruginosa (strain NIES-843 / IAM M-2473).